Consider the following 727-residue polypeptide: Two-component response regulator-like APRR7 (727 aa).

The segment at 1-47 (MNANEEGEGSRYPITDRKTGETKFDRVESRTEKHSEEEKTNGITMDV) is disordered. The segment covering 14 to 40 (ITDRKTGETKFDRVESRTEKHSEEEKT) has biased composition (basic and acidic residues). The region spanning 79 to 197 (RVLLVENDDC…ELKILWQHVW (119 aa)) is the Response regulatory domain. Disordered regions lie at residues 203–265 (SSGS…KKAV), 291–312 (NPEF…QEHD), 339–416 (KDEP…KTLD), 464–487 (SRYN…SLQD), 509–560 (ESLP…QPLP), and 606–670 (VNGS…SQRE). A compositionally biased stretch (low complexity) spans 246 to 259 (ASDGSSDGSGAQSS). 3 stretches are compositionally biased toward polar residues: residues 344-353 (SKTTGIMRQD), 467-487 (NPAS…SLQD), and 519-535 (VGSN…NNAF). Residues 538–555 (PGAPKVSSAGSSSVKHSS) show a composition bias toward low complexity. Positions 641-657 (GKNGNGDGSGSGSGSGS) are enriched in gly residues. Residues 669-711 (REAALTKFRQKRKERCFRKKVRYQSRKKLAEQRPRVRGQFVRK) enclose the CCT domain.

It belongs to the ARR-like family. Phosphorylated. Phosphorylation varies throughout the diurnal cycle.

It is found in the nucleus. In terms of biological role, transcriptional repressor of CCA1 and LHY, and positive regulator of LWD1 and LWD2 expression. Represses the expression of other clock proteins and master regulators of plant growth, development and response to abiotic stress. Involved in the positive and negative feedback loops of the circadian clock. Controls photoperiodic flowering response and temperature compensation. Expression of several members of the ARR-like family is controlled by circadian rhythm. APRR9, APRR7, and APRR5 coordinately act on the upstream region of the target genes to repress their expression from noon until midnight. The particular coordinated sequential expression of APRR9, APRR7, APRR5, APRR3 and APPR1 result to circadian waves that may be at the basis of the endogenous circadian clock. The chain is Two-component response regulator-like APRR7 (APRR7) from Arabidopsis thaliana (Mouse-ear cress).